The sequence spans 273 residues: Thiazole synthase (273 aa).

The active-site Schiff-base intermediate with DXP is K113. Residues G174, 201 to 202 (AG), and 223 to 224 (NT) each bind 1-deoxy-D-xylulose 5-phosphate.

Belongs to the ThiG family. As to quaternary structure, homotetramer. Forms heterodimers with either ThiH or ThiS.

Its subcellular location is the cytoplasm. The enzyme catalyses [ThiS sulfur-carrier protein]-C-terminal-Gly-aminoethanethioate + 2-iminoacetate + 1-deoxy-D-xylulose 5-phosphate = [ThiS sulfur-carrier protein]-C-terminal Gly-Gly + 2-[(2R,5Z)-2-carboxy-4-methylthiazol-5(2H)-ylidene]ethyl phosphate + 2 H2O + H(+). It functions in the pathway cofactor biosynthesis; thiamine diphosphate biosynthesis. Its function is as follows. Catalyzes the rearrangement of 1-deoxy-D-xylulose 5-phosphate (DXP) to produce the thiazole phosphate moiety of thiamine. Sulfur is provided by the thiocarboxylate moiety of the carrier protein ThiS. In vitro, sulfur can be provided by H(2)S. The polypeptide is Thiazole synthase (Salinibacter ruber (strain DSM 13855 / M31)).